The following is a 76-amino-acid chain: Mu-scoloptoxin(15)-Ssm1a (76 aa).

Residues 1 to 23 form the signal peptide; the sequence is MEKKIIFLVFLVALLALPGFIST. Residues 33–36 form an important for inhibition of KCNQ4 region; the sequence is KKRK. Cystine bridges form between Cys-43/Cys-69 and Cys-47/Cys-71.

This sequence belongs to the scoloptoxin-15 family. In terms of tissue distribution, expressed by the venom gland.

Its subcellular location is the secreted. Blocks voltage-gated potassium channels Kv7.4/KCNQ4 (IC(50)=2.5 uM), Kv7.1/KCNQ1 (IC(50)=2.8 uM), Kv7.2/KCNQ2 (IC(50)=2.7 uM) and Kv7.5/KCNQ5 (IC(50)=2.7 uM). Targets the pore domain, in particular negatively charged residues 'Asp-266' and 'Asp-288', of KCNQ4 and probably other KCNQ channel family members where these residues are conserved. In vivo, shows vasoconstrictive activity resulting in acute hypertension when injected intravenously in mice. Also induces coronary vasospasms ultimately leading to heart failure. Induces seizures when injected into the hippocampus of mice. Decreases respiratory rate while increasing respiratory amplitude, probably by triggering a contraction of the bronchial ring. This is Mu-scoloptoxin(15)-Ssm1a from Scolopendra mutilans (Chinese red-headed centipede).